We begin with the raw amino-acid sequence, 140 residues long: Lysozyme D (140 aa).

Residues 1–18 (MKAFIVLVALACAAPAFG) form the signal peptide. Residues 19-140 (RTMDRCSLAR…GWLPSIDDCF (122 aa)) enclose the C-type lysozyme domain. Cystine bridges form between Cys24/Cys139, Cys45/Cys129, Cys80/Cys96, and Cys92/Cys110. Catalysis depends on residues Glu50 and Asp68.

Belongs to the glycosyl hydrolase 22 family. As to expression, found in the midgut.

The enzyme catalyses Hydrolysis of (1-&gt;4)-beta-linkages between N-acetylmuramic acid and N-acetyl-D-glucosamine residues in a peptidoglycan and between N-acetyl-D-glucosamine residues in chitodextrins.. Its function is as follows. Unlikely to play an active role in the humoral immune defense. May have a function in the digestion of bacteria in the food. The chain is Lysozyme D (LysD) from Drosophila melanogaster (Fruit fly).